The primary structure comprises 1115 residues: Lateral signaling target protein 2 homolog (1115 aa).

Disordered regions lie at residues 308–488 (PLGS…DSDS), 545–586 (SEDD…PSTS), 600–742 (RLPS…SLSD), and 879–1027 (VQSS…PDGK). Residues 322–361 (NNSSSTTNTSNNNNNNTNNNNSSSGSDCTNNDKTGTTTNT) are compositionally biased toward low complexity. Residues 363–373 (KPVERLVDHRN) show a composition bias toward basic and acidic residues. 2 stretches are compositionally biased toward low complexity: residues 374–417 (NNTT…TPTA) and 425–444 (PSHS…NSPA). Residues 449 to 488 (YDDDDEDDDDDDVHADVEEDEDESGILDSDEHDLNDDSDS) are compositionally biased toward acidic residues. 2 stretches are compositionally biased toward low complexity: residues 558–577 (QQQQ…QQQQ) and 600–614 (RLPS…SSNN). Phosphoserine occurs at positions 603 and 604. Polar residues predominate over residues 615-628 (QQMTIKSPSEQTTT). Residues 632–655 (SNRHRHHSHHHHHHHHSHHHHHHQ) show a composition bias toward basic residues. Residues 658 to 676 (AAVAVAAAQDEQHNNNQPH) show a composition bias toward low complexity. Positions 677-706 (SHSHSSSHHHHHNHQSHSHPHRANRSTRKR) are enriched in basic residues. Composition is skewed to low complexity over residues 714–726 (TITT…GGEQ), 733–742 (DSSTASSLSD), and 881–901 (SSNS…AARS). Phosphoserine is present on S908. Low complexity-rich tracts occupy residues 921 to 975 (QQQQ…SPVS) and 988 to 1020 (TTTT…MSPP). The segment at 1025 to 1085 (DGKAPRCMSC…VCRECFMREV (61 aa)) adopts an FYVE-type zinc-finger fold. Zn(2+)-binding residues include C1031, C1034, C1047, C1050, C1055, C1058, C1077, and C1080. Residues 1088 to 1115 (SHSHGQSQSQIHSPTQQAGGRPQAASAS) form a disordered region. Positions 1090 to 1100 (SHGQSQSQIHS) are enriched in low complexity.

Belongs to the lst-2 family.

Negative regulator of epidermal growth factor receptor (EGFR) signaling. This chain is Lateral signaling target protein 2 homolog, found in Drosophila grimshawi (Hawaiian fruit fly).